We begin with the raw amino-acid sequence, 784 residues long: Cadherin-15 (784 aa).

The first 21 residues, 1 to 21, serve as a signal peptide directing secretion; that stretch reads MGSALLLALGLLAQSLGLSWA. A propeptide spanning residues 22-59 is cleaved from the precursor; that stretch reads VPEPKPSTLYPWRRASAPGRVRRAWVIPPISVSENHKR. 5 consecutive Cadherin domains span residues 60–151, 152–259, 260–374, 375–480, and 481–589; these read LPYP…RPAF, LQDV…APEF, TKDE…APVF, PENP…DHAP, and ALAL…TCLP. Topologically, residues 60–605 are extracellular; the sequence is LPYPLVQIKS…GGGVGVSLGA (546 aa). Residues asparagine 106 and asparagine 226 are each glycosylated (N-linked (GlcNAc...) asparagine). 3 N-linked (GlcNAc...) asparagine glycosylation sites follow: asparagine 530, asparagine 537, and asparagine 575. The chain crosses the membrane as a helical span at residues 606-625; that stretch reads LVIVLASTVVLLVLILLAAL. Residues 626–784 lie on the Cytoplasmic side of the membrane; sequence RTRFRGHSRG…ARLADMYGHQ (159 aa). The disordered stretch occupies residues 676–700; it reads EPRATSRSLGRPPLRRDAPFSYVPQ.

In terms of tissue distribution, skeletal muscle.

It is found in the cell membrane. Cadherins are calcium-dependent cell adhesion proteins. They preferentially interact with themselves in a homophilic manner in connecting cells; cadherins may thus contribute to the sorting of heterogeneous cell types. M-cadherin is part of the myogenic program and may provide a trigger for terminal muscle differentiation. This is Cadherin-15 (Cdh15) from Mus musculus (Mouse).